Here is a 231-residue protein sequence, read N- to C-terminus: Putative Nudix hydrolase FPV054 (231 aa).

Residues 74–217 (SKRRSFSEIL…SNEKYEYLHF (144 aa)) form the Nudix hydrolase domain. Positions 125–146 (GRVKNKESIYQCLSRELSEESD) match the Nudix box motif. Residue Glu131 coordinates Mg(2+). Catalysis depends on Glu140, which acts as the Nucleophile. 2 residues coordinate Mg(2+): Glu144 and Asp165.

The protein belongs to the Nudix hydrolase family. Mg(2+) is required as a cofactor. The cofactor is Mn(2+).

Decapping enzyme required for the removal of the 5'-end m7GpppN cap tethered to viral and host mRNAs to allow their decay in cells. May therefore accelerate viral and cellular mRNA turnover to eliminate competing host mRNAs and allow stage-specific synthesis of viral proteins. Acceleration of the turnover of cellular transcripts may even promote the shutoff of host protein synthesis. Does not cleave unmethylated RNAs or RNAs shorter than 24 nucleotides. In Vertebrata (FPV), this protein is Putative Nudix hydrolase FPV054.